Consider the following 184-residue polypeptide: Probable DNA-directed RNA polymerase subunit delta (184 aa).

One can recognise an HTH HARE-type domain in the interval 14–82; sequence KSFIDMAHTL…GENNWGLRDW (69 aa). The segment at 114–184 is disordered; sequence LLGEEEEEID…FNDDPDDDKI (71 aa). Positions 117 to 184 are enriched in acidic residues; the sequence is EEEEEIDDQE…FNDDPDDDKI (68 aa).

It belongs to the RpoE family. RNAP is composed of a core of 2 alpha, a beta and a beta' subunits. The core is associated with a delta subunit and one of several sigma factors.

Its function is as follows. Participates in both the initiation and recycling phases of transcription. In the presence of the delta subunit, RNAP displays an increased specificity of transcription, a decreased affinity for nucleic acids, and an increased efficiency of RNA synthesis because of enhanced recycling. The sequence is that of Probable DNA-directed RNA polymerase subunit delta from Staphylococcus carnosus (strain TM300).